The following is a 202-amino-acid chain: UPF0301 protein Meso_0753 (202 aa).

It belongs to the UPF0301 (AlgH) family.

The sequence is that of UPF0301 protein Meso_0753 from Chelativorans sp. (strain BNC1).